The chain runs to 126 residues: Aspartate 1-decarboxylase (126 aa).

Ser25 (schiff-base intermediate with substrate; via pyruvic acid) is an active-site residue. Pyruvic acid (Ser) is present on Ser25. Residue Thr57 coordinates substrate. The active-site Proton donor is the Tyr58. 73–75 (GGA) serves as a coordination point for substrate.

The protein belongs to the PanD family. Heterooctamer of four alpha and four beta subunits. Pyruvate serves as cofactor. Is synthesized initially as an inactive proenzyme, which is activated by self-cleavage at a specific serine bond to produce a beta-subunit with a hydroxyl group at its C-terminus and an alpha-subunit with a pyruvoyl group at its N-terminus.

It localises to the cytoplasm. The enzyme catalyses L-aspartate + H(+) = beta-alanine + CO2. Its pathway is cofactor biosynthesis; (R)-pantothenate biosynthesis; beta-alanine from L-aspartate: step 1/1. In terms of biological role, catalyzes the pyruvoyl-dependent decarboxylation of aspartate to produce beta-alanine. This chain is Aspartate 1-decarboxylase, found in Acinetobacter baylyi (strain ATCC 33305 / BD413 / ADP1).